The chain runs to 938 residues: Bifunctional uridylyltransferase/uridylyl-removing enzyme (938 aa).

A uridylyltransferase region spans residues 1–379 (MPPRLRPTHL…PGRAQKRKPL (379 aa)). The tract at residues 380–733 (DEPGFHEVGG…GRIRSELNAA (354 aa)) is uridylyl-removing. In terms of domain architecture, HD spans 495–617 (VDEHTLRAVG…VQSPERLRLL (123 aa)). ACT domains follow at residues 734-813 (EVVV…PVAR) and 845-924 (VVEA…TAQA).

This sequence belongs to the GlnD family. Mg(2+) serves as cofactor.

The enzyme catalyses [protein-PII]-L-tyrosine + UTP = [protein-PII]-uridylyl-L-tyrosine + diphosphate. It catalyses the reaction [protein-PII]-uridylyl-L-tyrosine + H2O = [protein-PII]-L-tyrosine + UMP + H(+). Uridylyltransferase (UTase) activity is inhibited by glutamine, while glutamine activates uridylyl-removing (UR) activity. Modifies, by uridylylation and deuridylylation, the PII regulatory proteins (GlnB and homologs), in response to the nitrogen status of the cell that GlnD senses through the glutamine level. Under low glutamine levels, catalyzes the conversion of the PII proteins and UTP to PII-UMP and PPi, while under higher glutamine levels, GlnD hydrolyzes PII-UMP to PII and UMP (deuridylylation). Thus, controls uridylylation state and activity of the PII proteins, and plays an important role in the regulation of nitrogen assimilation and metabolism. This chain is Bifunctional uridylyltransferase/uridylyl-removing enzyme, found in Phenylobacterium zucineum (strain HLK1).